We begin with the raw amino-acid sequence, 173 residues long: Acireductone dioxygenase (173 aa).

Positions 1 to 21 are disordered; it reads MKFYYHDNDSSVDQCAPHDSG. Positions 84, 86, 90, and 129 each coordinate Fe(2+). The Ni(2+) site is built by His84, His86, Glu90, and His129.

Belongs to the acireductone dioxygenase (ARD) family. It depends on Fe(2+) as a cofactor. The cofactor is Ni(2+).

It is found in the cytoplasm. Its subcellular location is the nucleus. The catalysed reaction is 1,2-dihydroxy-5-(methylsulfanyl)pent-1-en-3-one + O2 = 4-methylsulfanyl-2-oxobutanoate + formate + 2 H(+). The enzyme catalyses 1,2-dihydroxy-5-(methylsulfanyl)pent-1-en-3-one + O2 = 3-(methylsulfanyl)propanoate + CO + formate + 2 H(+). It participates in amino-acid biosynthesis; L-methionine biosynthesis via salvage pathway; L-methionine from S-methyl-5-thio-alpha-D-ribose 1-phosphate: step 5/6. Functionally, catalyzes 2 different reactions between oxygen and the acireductone 1,2-dihydroxy-3-keto-5-methylthiopentene (DHK-MTPene) depending upon the metal bound in the active site. Fe-containing acireductone dioxygenase (Fe-ARD) produces formate and 2-keto-4-methylthiobutyrate (KMTB), the alpha-ketoacid precursor of methionine in the methionine recycle pathway. Ni-containing acireductone dioxygenase (Ni-ARD) produces methylthiopropionate, carbon monoxide and formate, and does not lie on the methionine recycle pathway. This Yarrowia lipolytica (strain CLIB 122 / E 150) (Yeast) protein is Acireductone dioxygenase.